The chain runs to 715 residues: ATP-dependent DNA helicase Hel308 (715 aa).

ATP-binding positions include Gln-35 and 53-60 (SPTGSGKT). The 164-residue stretch at 40–203 (KKGLLDGNRL…WLGAEPVATN (164 aa)) folds into the Helicase ATP-binding domain. Residues 152–155 (DELH) carry the DEAH box motif. A Helicase C-terminal domain is found at 236-442 (HGDDAIIAYT…ERAFYTFLLG (207 aa)).

Belongs to the helicase family. Hel308 subfamily. As to quaternary structure, monomer. Interacts with PINA ATPase which decreases both DNA helicase activities of this protein.

It carries out the reaction Couples ATP hydrolysis with the unwinding of duplex DNA by translocating in the 3'-5' direction.. The enzyme catalyses ATP + H2O = ADP + phosphate + H(+). It catalyses the reaction Couples ATP hydrolysis with the unwinding of duplex DNA at the replication fork by translocating in the 5'-3' direction. This creates two antiparallel DNA single strands (ssDNA). The leading ssDNA polymer is the template for DNA polymerase III holoenzyme which synthesizes a continuous strand.. With respect to regulation, PINA inhibits the (weak) 5'-3' but not the 3'-5' helicase activity of this protein on overhang substrates. DNA-dependent ATPase and 3'-5' DNA helicase that may be involved in repair of stalled replication forks. In terms of biological role, has predominantly 3'-5' helicase activity but also a weak 5'-3' helicase activity. Has the ability to unwind replication forks, preferentially removing the lagging strand. Hjc, Hjm (Hel308) and branch migration ATPase PINA coordinate HJ migration and cleavage of replication forks in a coordinated way. The protein is ATP-dependent DNA helicase Hel308 of Saccharolobus islandicus (strain REY15A) (Sulfolobus islandicus).